A 153-amino-acid chain; its full sequence is Cytochrome c-type biogenesis protein CcmE (153 aa).

The Cytoplasmic segment spans residues 1–7 (MKPRHKR). Residues 8–28 (LAIAGGVLVAVGAIATLVLNA) form a helical; Signal-anchor for type II membrane protein membrane-spanning segment. The Periplasmic segment spans residues 29–153 (FQSNLVFFYS…SSQAATGDPR (125 aa)). Residues His-120 and Tyr-124 each contribute to the heme site. The segment at 130–153 (AEALKRAKEGGQMQSSQAATGDPR) is disordered. The span at 141–153 (QMQSSQAATGDPR) shows a compositional bias: polar residues.

Belongs to the CcmE/CycJ family.

The protein resides in the cell inner membrane. Its function is as follows. Heme chaperone required for the biogenesis of c-type cytochromes. Transiently binds heme delivered by CcmC and transfers the heme to apo-cytochromes in a process facilitated by CcmF and CcmH. The sequence is that of Cytochrome c-type biogenesis protein CcmE from Leptothrix cholodnii (strain ATCC 51168 / LMG 8142 / SP-6) (Leptothrix discophora (strain SP-6)).